The chain runs to 349 residues: Protein Wnt-7b (349 aa).

The first 24 residues, 1-24 (MHRNFRKWIFYVFLCFGVLYVKLG), serve as a signal peptide directing secretion. 5 disulfide bridges follow: Cys-73/Cys-84, Cys-123/Cys-131, Cys-133/Cys-152, Cys-200/Cys-214, and Cys-202/Cys-209. 2 N-linked (GlcNAc...) asparagine glycosylation sites follow: Asn-83 and Asn-127. Ser-206 carries O-palmitoleoyl serine; by PORCN lipidation. A disordered linker region spans residues 238–266 (VEVVRASRLRQPTFLRIKQLRSYQKPMET). 6 disulfide bridges follow: Cys-278–Cys-309, Cys-294–Cys-304, Cys-308–Cys-348, Cys-324–Cys-339, Cys-326–Cys-336, and Cys-331–Cys-332. An N-linked (GlcNAc...) asparagine glycan is attached at Asn-295.

It belongs to the Wnt family. As to quaternary structure, forms a soluble 1:1 complex with AFM; this prevents oligomerization and is required for prolonged biological activity. The complex with AFM may represent the physiological form in body fluids. Interacts with FZD1 and FZD10. Interacts with FZD4 (in vitro). Interacts with PORCN. Interacts with glypican GPC3. Interacts (via intrinsically disordered linker region) with RECK; interaction with RECK confers ligand selectivity for Wnt7 in brain endothelial cells and allows these cells to selectively respond to Wnt7. Palmitoleoylation is required for efficient binding to frizzled receptors. Depalmitoleoylation leads to Wnt signaling pathway inhibition. In terms of tissue distribution, moderately expressed in fetal brain, weakly expressed in fetal lung and kidney, and faintly expressed in adult brain, lung and prostate.

It localises to the secreted. It is found in the extracellular space. The protein resides in the extracellular matrix. Functionally, ligand for members of the frizzled family of seven transmembrane receptors that functions in the canonical Wnt/beta-catenin signaling pathway. Required for normal fusion of the chorion and the allantois during placenta development. Required for central nervous system (CNS) angiogenesis and blood-brain barrier regulation. This is Protein Wnt-7b (WNT7B) from Homo sapiens (Human).